Reading from the N-terminus, the 547-residue chain is Sesterfisheric acid synthase (547 aa).

A helical membrane pass occupies residues 19-39 (IMGCSLGTGLLVSMIIYNYFF). N-linked (GlcNAc...) asparagine glycans are attached at residues Asn-341 and Asn-404. Cys-490 contacts heme.

Belongs to the cytochrome P450 family. The cofactor is heme.

Its subcellular location is the membrane. It carries out the reaction sesterfisherol + 3 reduced [NADPH--hemoprotein reductase] + 3 O2 = sesterfisherate + 3 oxidized [NADPH--hemoprotein reductase] + 4 H2O + 4 H(+). It participates in secondary metabolite biosynthesis; terpenoid biosynthesis. Cytochrome P450 monooxygenase; part of the gene cluster that mediates the biosynthesis of sesterfisheric acid. The bifunctional terpene synthase NfSS converts DMAPP and IPP, and also GGPP, into sesterfisherol. The C-terminal prenyltransferase (PT) domain of NfSS catalyzes formation of GFPP, whereas the N-terminal terpene cyclase (TC) domain catalyzes the cyclization of GFPP to sesterfisherol. The cytochrome P450 monooxygenase NfP450 then catalyzes oxidative modifications of sesterfisherol into sesterfisheric acid. The chain is Sesterfisheric acid synthase from Neosartorya fischeri (strain ATCC 1020 / DSM 3700 / CBS 544.65 / FGSC A1164 / JCM 1740 / NRRL 181 / WB 181) (Aspergillus fischerianus).